Consider the following 204-residue polypeptide: MTFKGFSKKDFKTMQIPGLEARMNGIQTDIQPKFRAVGEELTTYLSAKLGDEMFLHIARHQRRSVNPPESTWLAICHDKRGYKKHPHFQVGLFDNYLFIWLAFIYENEESAKIANRFLKEKKLLADLPDNFAISPDHTEEKTYPVHDGQLKATLERFRDVKKGEFLVGKIYLPDDSHLSPGKDFIKEAEMVLDELIPLYKASLQ.

The protein belongs to the UPF0637 family.

In Listeria monocytogenes serotype 4b (strain CLIP80459), this protein is UPF0637 protein Lm4b_01081.